We begin with the raw amino-acid sequence, 213 residues long: Golgi SNAP receptor complex member 2 homolog memb-1 (213 aa).

Over 1–189 (MEALYQSTNF…QVIDRRVRED (189 aa)) the chain is Cytoplasmic. The helical; Anchor for type IV membrane protein transmembrane segment at 190–210 (WILFVIGCIVCCIFMYAFYRF) threads the bilayer. At 211–213 (WRG) the chain is on the vesicular side.

Belongs to the GOSR2 family. As to quaternary structure, part of a unique SNARE complex.

The protein localises to the golgi apparatus. Its subcellular location is the cis-Golgi network membrane. The protein resides in the golgi apparatus membrane. It is found in the endoplasmic reticulum membrane. Its function is as follows. Involved in transport of proteins from the cis/medial-Golgi to the trans-Golgi network. This is Golgi SNAP receptor complex member 2 homolog memb-1 from Caenorhabditis elegans.